Here is a 326-residue protein sequence, read N- to C-terminus: L-lactate dehydrogenase (326 aa).

Residues Val-26, Asp-47, Lys-52, Tyr-78, and 92-93 (GA) each bind NAD(+). Residues Gln-95 and Arg-101 each contribute to the substrate site. NAD(+) contacts are provided by residues Thr-114, 131-133 (ASN), and Ser-156. 133 to 136 (NPVD) contacts substrate. Substrate is bound at residue 161-164 (DTAR). Residues Arg-166 and His-181 each contribute to the beta-D-fructose 1,6-bisphosphate site. His-188 serves as the catalytic Proton acceptor. Tyr-233 carries the phosphotyrosine modification. Thr-242 serves as a coordination point for substrate.

This sequence belongs to the LDH/MDH superfamily. LDH family. Homotetramer.

The protein localises to the cytoplasm. The catalysed reaction is (S)-lactate + NAD(+) = pyruvate + NADH + H(+). The protein operates within fermentation; pyruvate fermentation to lactate; (S)-lactate from pyruvate: step 1/1. Its activity is regulated as follows. Allosterically activated by fructose 1,6-bisphosphate (FBP). Catalyzes the conversion of lactate to pyruvate. In Corynebacterium jeikeium (strain K411), this protein is L-lactate dehydrogenase.